Reading from the N-terminus, the 190-residue chain is Inosine triphosphate pyrophosphatase (190 aa).

Position 8-13 (8-13) interacts with ITP; that stretch reads TGNANK. Glu-37 is a binding site for Mg(2+). Residues Lys-49, 65–66, Lys-82, 140–143, Lys-163, and 168–169 contribute to the ITP site; these read DT, FGWD, and HR.

The protein belongs to the HAM1 NTPase family. In terms of assembly, homodimer. Mg(2+) is required as a cofactor. It depends on Mn(2+) as a cofactor.

The protein localises to the cytoplasm. The protein resides in the nucleus. It carries out the reaction ITP + H2O = IMP + diphosphate + H(+). It catalyses the reaction dITP + H2O = dIMP + diphosphate + H(+). The catalysed reaction is XTP + H2O = XMP + diphosphate + H(+). Pyrophosphatase that hydrolyzes non-canonical purine nucleotides such as inosine triphosphate (ITP), deoxyinosine triphosphate (dITP) or xanthosine 5'-triphosphate (XTP) to their respective monophosphate derivatives. The enzyme does not distinguish between the deoxy- and ribose forms. Probably excludes non-canonical purines from RNA and DNA precursor pools, thus preventing their incorporation into RNA and DNA and avoiding chromosomal lesions. This is Inosine triphosphate pyrophosphatase from Batrachochytrium dendrobatidis (strain JAM81 / FGSC 10211) (Frog chytrid fungus).